We begin with the raw amino-acid sequence, 508 residues long: Endo-4-O-sulfatase (508 aa).

3-oxoalanine (Ser) is present on S84.

The protein belongs to the sulfatase family. The conversion to 3-oxoalanine (also known as C-formylglycine, FGly), of a serine or cysteine residue in prokaryotes and of a cysteine residue in eukaryotes, is critical for catalytic activity.

Functionally, endosulfatase involved in the degradation of the glycosaminoglycans (GAGs) chondroitin sulfate (CS) and dermatan sulfate (DS). Efficiently hydrolyzes sulfate groups from a broad range of substrate size, including disaccharide to high molecular weight CS and DS polymers. Has a strict specificity for the 4-O-sulfate groups of galactosamine. GAG-specific sulfatases play a key role in the persistence of the major human gut symbiont B.thetaiotaomicron in the host gastrointestinal tract. This Bacteroides thetaiotaomicron (strain ATCC 29148 / DSM 2079 / JCM 5827 / CCUG 10774 / NCTC 10582 / VPI-5482 / E50) protein is Endo-4-O-sulfatase.